The sequence spans 121 residues: Chorion class A proteins Ld9 (121 aa).

It belongs to the chorion protein family.

Its function is as follows. This protein is one of many from the eggshell of the gypsy moth. The sequence is that of Chorion class A proteins Ld9 from Lymantria dispar (Gypsy moth).